The primary structure comprises 539 residues: Eukaryotic translation initiation factor 3 subunit L (539 aa).

The PCI domain occupies Thr-302–His-514.

This sequence belongs to the eIF-3 subunit L family. As to quaternary structure, component of the eukaryotic translation initiation factor 3 (eIF-3) complex.

The protein localises to the cytoplasm. Its function is as follows. Component of the eukaryotic translation initiation factor 3 (eIF-3) complex, which is involved in protein synthesis of a specialized repertoire of mRNAs and, together with other initiation factors, stimulates binding of mRNA and methionyl-tRNAi to the 40S ribosome. The eIF-3 complex specifically targets and initiates translation of a subset of mRNAs involved in cell proliferation. This Anopheles gambiae (African malaria mosquito) protein is Eukaryotic translation initiation factor 3 subunit L.